We begin with the raw amino-acid sequence, 163 residues long: Phosphopantetheine adenylyltransferase (163 aa).

Residue Ser-11 participates in substrate binding. ATP-binding positions include 11–12 and His-19; that span reads SF. Positions 43, 76, and 90 each coordinate substrate. Residues 91–93, Glu-101, and 126–132 contribute to the ATP site; these read GLR and WQALSSS.

This sequence belongs to the bacterial CoaD family. As to quaternary structure, homohexamer. It depends on Mg(2+) as a cofactor.

It localises to the cytoplasm. The enzyme catalyses (R)-4'-phosphopantetheine + ATP + H(+) = 3'-dephospho-CoA + diphosphate. Its pathway is cofactor biosynthesis; coenzyme A biosynthesis; CoA from (R)-pantothenate: step 4/5. Reversibly transfers an adenylyl group from ATP to 4'-phosphopantetheine, yielding dephospho-CoA (dPCoA) and pyrophosphate. The sequence is that of Phosphopantetheine adenylyltransferase from Streptococcus pyogenes serotype M2 (strain MGAS10270).